The sequence spans 198 residues: Alpha-S1-casein (198 aa).

The signal sequence occupies residues 1-15; that stretch reads MKLLILTCLVASAVA. Disordered stretches follow at residues 28-47 and 71-97; these read QTQR…LKEE and SEST…EQKH. Residues Ser39, Ser80, Ser81, Ser83, Ser84, and Ser85 each carry the phosphoserine modification.

The protein belongs to the alpha-casein family. In terms of tissue distribution, mammary gland specific. Secreted in milk.

It is found in the secreted. Functionally, important role in the capacity of milk to transport calcium phosphate. This chain is Alpha-S1-casein (CSN1S1), found in Cavia porcellus (Guinea pig).